A 421-amino-acid chain; its full sequence is Trimethyllysine dioxygenase, mitochondrial (421 aa).

Residues 1–15 (MWYHKLLHQQSRLQN) constitute a mitochondrion transit peptide. Lysine 179 and lysine 236 each carry N6-acetyllysine. Residues histidine 242, aspartate 244, and histidine 389 each coordinate Fe cation.

It belongs to the gamma-BBH/TMLD family. As to quaternary structure, homodimer. It depends on Fe(2+) as a cofactor. Requires L-ascorbate as cofactor.

The protein localises to the mitochondrion matrix. The enzyme catalyses N(6),N(6),N(6)-trimethyl-L-lysine + 2-oxoglutarate + O2 = (3S)-3-hydroxy-N(6),N(6),N(6)-trimethyl-L-lysine + succinate + CO2. Its pathway is amine and polyamine biosynthesis; carnitine biosynthesis. Its function is as follows. Converts trimethyllysine (TML) into hydroxytrimethyllysine (HTML). The sequence is that of Trimethyllysine dioxygenase, mitochondrial (Tmlhe) from Rattus norvegicus (Rat).